We begin with the raw amino-acid sequence, 379 residues long: Spermidine/putrescine import ATP-binding protein PotA (379 aa).

Residues 10 to 240 (VTIDQVSKAY…PATDFVAKFI (231 aa)) enclose the ABC transporter domain. 42–49 (GPSGCGKT) contributes to the ATP binding site.

The protein belongs to the ABC transporter superfamily. Spermidine/putrescine importer (TC 3.A.1.11.1) family. The complex is composed of two ATP-binding proteins (PotA), two transmembrane proteins (PotB and PotC) and a solute-binding protein (PotD).

The protein resides in the cell inner membrane. It carries out the reaction ATP + H2O + polyamine-[polyamine-binding protein]Side 1 = ADP + phosphate + polyamineSide 2 + [polyamine-binding protein]Side 1.. Its function is as follows. Part of the ABC transporter complex PotABCD involved in spermidine/putrescine import. Responsible for energy coupling to the transport system. The polypeptide is Spermidine/putrescine import ATP-binding protein PotA (Treponema pallidum (strain Nichols)).